The chain runs to 670 residues: DNA ligase (670 aa).

NAD(+) contacts are provided by residues Asp32–Asp36, Ser81–Leu82, and Glu111. Lys113 (N6-AMP-lysine intermediate) is an active-site residue. Positions 134, 171, 290, and 314 each coordinate NAD(+). Zn(2+) contacts are provided by Cys408, Cys411, Cys426, and Cys432. Residues Glu591–Glu670 form the BRCT domain.

It belongs to the NAD-dependent DNA ligase family. LigA subfamily. Requires Mg(2+) as cofactor. Mn(2+) serves as cofactor.

It catalyses the reaction NAD(+) + (deoxyribonucleotide)n-3'-hydroxyl + 5'-phospho-(deoxyribonucleotide)m = (deoxyribonucleotide)n+m + AMP + beta-nicotinamide D-nucleotide.. Functionally, DNA ligase that catalyzes the formation of phosphodiester linkages between 5'-phosphoryl and 3'-hydroxyl groups in double-stranded DNA using NAD as a coenzyme and as the energy source for the reaction. It is essential for DNA replication and repair of damaged DNA. The chain is DNA ligase from Shewanella sediminis (strain HAW-EB3).